A 251-amino-acid chain; its full sequence is Triosephosphate isomerase (251 aa).

Substrate is bound at residue 9-11; the sequence is NWK. Histidine 95 functions as the Electrophile in the catalytic mechanism. Glutamate 167 (proton acceptor) is an active-site residue. Residues glycine 173, serine 212, and 233–234 contribute to the substrate site; that span reads GG.

This sequence belongs to the triosephosphate isomerase family. In terms of assembly, homodimer.

It is found in the cytoplasm. The catalysed reaction is D-glyceraldehyde 3-phosphate = dihydroxyacetone phosphate. Its pathway is carbohydrate biosynthesis; gluconeogenesis. It participates in carbohydrate degradation; glycolysis; D-glyceraldehyde 3-phosphate from glycerone phosphate: step 1/1. Involved in the gluconeogenesis. Catalyzes stereospecifically the conversion of dihydroxyacetone phosphate (DHAP) to D-glyceraldehyde-3-phosphate (G3P). The polypeptide is Triosephosphate isomerase (Pseudomonas fluorescens (strain Pf0-1)).